A 155-amino-acid polypeptide reads, in one-letter code: UPF0178 protein RHE_CH02229 (155 aa).

It belongs to the UPF0178 family.

The polypeptide is UPF0178 protein RHE_CH02229 (Rhizobium etli (strain ATCC 51251 / DSM 11541 / JCM 21823 / NBRC 15573 / CFN 42)).